A 48-amino-acid chain; its full sequence is uncharacterized protein (48 aa).

The chain crosses the membrane as a helical span at residues 21-43; that stretch reads SIFVSLGVFAVSVAILKSRLGNF.

It is found in the membrane. This is an uncharacterized protein from Schizosaccharomyces pombe (strain 972 / ATCC 24843) (Fission yeast).